Here is a 291-residue protein sequence, read N- to C-terminus: Elongation factor Ts (291 aa).

Residues 80–83 (TDFV) form an involved in Mg(2+) ion dislocation from EF-Tu region.

Belongs to the EF-Ts family.

It localises to the cytoplasm. Functionally, associates with the EF-Tu.GDP complex and induces the exchange of GDP to GTP. It remains bound to the aminoacyl-tRNA.EF-Tu.GTP complex up to the GTP hydrolysis stage on the ribosome. This chain is Elongation factor Ts, found in Ligilactobacillus salivarius (strain UCC118) (Lactobacillus salivarius).